The chain runs to 266 residues: MKQKARVIVAGALGKMGKETLKAIAGDEELELIAAVDIKAKGEKVADLIGIAGLDISLENDLDEVLENYQPDVLVDFTNPQAVFNNARSALKIGVFCVIGTTGLNEIEIKELEKLAGEKQVGVAIIPNFAIGAVLMMKFASEAAKYFPEVEIIELHHDQKMDAPSGTAIKTAEMINANRPLRPPRNVREFEKIAGCRGGDLGQVRIHSVRLPGLIAHQEVIFGGAGQGLKIRHDSFDRAGFMPGVVMVIKKILQRKELVYGMENLL.

11-16 (GALGKM) contributes to the NAD(+) binding site. Lysine 39 serves as a coordination point for NADP(+). 100-102 (GTT) contacts NAD(+). Residue histidine 156 is the Proton donor/acceptor of the active site. Histidine 157 contacts (S)-2,3,4,5-tetrahydrodipicolinate. Lysine 160 (proton donor) is an active-site residue. Position 166–167 (166–167 (GT)) interacts with (S)-2,3,4,5-tetrahydrodipicolinate.

Belongs to the DapB family.

It localises to the cytoplasm. The enzyme catalyses (S)-2,3,4,5-tetrahydrodipicolinate + NAD(+) + H2O = (2S,4S)-4-hydroxy-2,3,4,5-tetrahydrodipicolinate + NADH + H(+). It catalyses the reaction (S)-2,3,4,5-tetrahydrodipicolinate + NADP(+) + H2O = (2S,4S)-4-hydroxy-2,3,4,5-tetrahydrodipicolinate + NADPH + H(+). The protein operates within amino-acid biosynthesis; L-lysine biosynthesis via DAP pathway; (S)-tetrahydrodipicolinate from L-aspartate: step 4/4. Catalyzes the conversion of 4-hydroxy-tetrahydrodipicolinate (HTPA) to tetrahydrodipicolinate. The polypeptide is 4-hydroxy-tetrahydrodipicolinate reductase (Syntrophomonas wolfei subsp. wolfei (strain DSM 2245B / Goettingen)).